Consider the following 874-residue polypeptide: Alanine--tRNA ligase (874 aa).

The Zn(2+) site is built by histidine 562, histidine 566, cysteine 664, and histidine 668.

Belongs to the class-II aminoacyl-tRNA synthetase family. Requires Zn(2+) as cofactor.

The protein resides in the cytoplasm. The enzyme catalyses tRNA(Ala) + L-alanine + ATP = L-alanyl-tRNA(Ala) + AMP + diphosphate. Its function is as follows. Catalyzes the attachment of alanine to tRNA(Ala) in a two-step reaction: alanine is first activated by ATP to form Ala-AMP and then transferred to the acceptor end of tRNA(Ala). Also edits incorrectly charged Ser-tRNA(Ala) and Gly-tRNA(Ala) via its editing domain. The chain is Alanine--tRNA ligase from Neisseria meningitidis serogroup B (strain ATCC BAA-335 / MC58).